The chain runs to 215 residues: MSKLRKITSLIFLTIIMVGCSSIPEQPTSVEWQSHQNRLLQIENYQASGKLAYISPEQRQSLNFIWKHSPNQSQLRLTTFLGQTALNLTIDSLGAKVVTYDDQVFTHASASVLVEQLTGLQIPIDHLPQWFLGIPDQADSYQLNSTNTLESLSKQVSSQLWTLNFANYRNTEMQSKQLSDKDNVKVETIPLPTRLSFKQDENKINIVVSKWTLKK.

An N-terminal signal peptide occupies residues 1–19 (MSKLRKITSLIFLTIIMVG). A lipid anchor (N-palmitoyl cysteine) is attached at Cys-20. Cys-20 carries S-diacylglycerol cysteine lipidation.

This sequence belongs to the LolB family. In terms of assembly, monomer.

Its subcellular location is the cell outer membrane. Plays a critical role in the incorporation of lipoproteins in the outer membrane after they are released by the LolA protein. The polypeptide is Outer-membrane lipoprotein LolB (Vibrio atlanticus (strain LGP32) (Vibrio splendidus (strain Mel32))).